The primary structure comprises 347 residues: NADH-ubiquinone oxidoreductase chain 2 (347 aa).

The next 9 helical transmembrane spans lie at 3-23 (PLALSLILTTLFTGTLITMMS), 59-79 (YFMTQATASMMLMMALTINLM), 93-115 (VASNVALMALMTKLGSAPFHFWV), 150-170 (NTNLIYLSGLLSILIGGWGGL), 178-198 (ILAYSSISHMGWMLIILPFNP), 200-220 (LTLLNLAIYILLTLSIFMILA), 240-260 (MTIMLMTTLLSLGGLPPLSGF), 274-294 (NSIIMPLTMAIMTLLNMYFYT), and 326-346 (LPTLITLSNMLLPLTPMISML).

The protein belongs to the complex I subunit 2 family. Core subunit of respiratory chain NADH dehydrogenase (Complex I) which is composed of 45 different subunits. Interacts with TMEM242.

It localises to the mitochondrion inner membrane. It carries out the reaction a ubiquinone + NADH + 5 H(+)(in) = a ubiquinol + NAD(+) + 4 H(+)(out). In terms of biological role, core subunit of the mitochondrial membrane respiratory chain NADH dehydrogenase (Complex I) which catalyzes electron transfer from NADH through the respiratory chain, using ubiquinone as an electron acceptor. Essential for the catalytic activity and assembly of complex I. This chain is NADH-ubiquinone oxidoreductase chain 2, found in Elephas maximus (Indian elephant).